Consider the following 350-residue polypeptide: Nuclear pore complex-interacting protein family member A1 (350 aa).

Residues 306–325 form a disordered region; that stretch reads KTPPECLLTPLPPSAPPSVD.

This sequence belongs to the NPIP family. May associate with the nuclear pore complex. As to expression, widely expressed.

The protein localises to the nucleus. Its subcellular location is the nuclear pore complex. It is found in the nucleus membrane. The protein is Nuclear pore complex-interacting protein family member A1 (NPIPA1) of Homo sapiens (Human).